A 435-amino-acid polypeptide reads, in one-letter code: uncharacterized protein (435 aa).

WD repeat units follow at residues 105–149 (DLEY…GIDS), 164–204 (HNNA…SKTQ), and 207–247 (AHDK…HSTI). S266 bears the Phosphoserine mark. The stretch at 313–353 (GHKGDVNAVKWMPGSKSKLATCGDDCVVSLWDLDQPVNPSP) is one WD 4 repeat. Residues 352 to 371 (SPAPTLSVSGTTPGMTGSTS) form a disordered region. A compositionally biased stretch (low complexity) spans 358–371 (SVSGTTPGMTGSTS). S388 is modified (phosphoserine).

It is found in the cytoplasm. It localises to the golgi apparatus. This is an uncharacterized protein from Schizosaccharomyces pombe (strain 972 / ATCC 24843) (Fission yeast).